The primary structure comprises 347 residues: GMP reductase (347 aa).

108 to 131 (ADFEKTKQILDLNPALNFVCIDVA) contributes to the NADP(+) binding site. 2 residues coordinate K(+): G181 and G183. Catalysis depends on C186, which acts as the Thioimidate intermediate. 216–239 (IISDGGCTTPGDVAKAFGGGADFV) serves as a coordination point for NADP(+).

This sequence belongs to the IMPDH/GMPR family. GuaC type 1 subfamily. As to quaternary structure, homotetramer.

It catalyses the reaction IMP + NH4(+) + NADP(+) = GMP + NADPH + 2 H(+). Functionally, catalyzes the irreversible NADPH-dependent deamination of GMP to IMP. It functions in the conversion of nucleobase, nucleoside and nucleotide derivatives of G to A nucleotides, and in maintaining the intracellular balance of A and G nucleotides. The polypeptide is GMP reductase (Escherichia coli O157:H7).